A 281-amino-acid chain; its full sequence is Putative phosphatase/phosphodiesterase MG246 (281 aa).

Fe cation-binding residues include aspartate 11, glutamate 42, asparagine 43, and asparagine 70. Catalysis depends on histidine 71, which acts as the Proton donor. Fe cation is bound by residues histidine 157, histidine 182, and histidine 184.

Belongs to the YmdB-like family. The cofactor is Fe(3+).

This chain is Putative phosphatase/phosphodiesterase MG246, found in Mycoplasma genitalium (strain ATCC 33530 / DSM 19775 / NCTC 10195 / G37) (Mycoplasmoides genitalium).